A 396-amino-acid polypeptide reads, in one-letter code: L-lactate dehydrogenase (396 aa).

The 380-residue stretch at 1–380 folds into the FMN hydroxy acid dehydrogenase domain; that stretch reads MIISAASDYR…SGDSLVQELG (380 aa). Residue Y24 coordinates substrate. 2 residues coordinate FMN: S106 and Q127. Substrate is bound at residue Y129. An FMN-binding site is contributed by T155. R164 lines the substrate pocket. K251 is an FMN binding site. H275 acts as the Proton acceptor in catalysis. Substrate is bound at residue R278. 306-330 is a binding site for FMN; the sequence is DSGIRNGLDVVRMIALGADTVLLGR.

It belongs to the FMN-dependent alpha-hydroxy acid dehydrogenase family. It depends on FMN as a cofactor.

Its subcellular location is the cell inner membrane. It catalyses the reaction (S)-lactate + A = pyruvate + AH2. Catalyzes the conversion of L-lactate to pyruvate. Is coupled to the respiratory chain. The polypeptide is L-lactate dehydrogenase (Salmonella paratyphi B (strain ATCC BAA-1250 / SPB7)).